Reading from the N-terminus, the 398-residue chain is UDP-D-apiose/UDP-D-xylose synthase (398 aa).

57–88 lines the NAD(+) pocket; the sequence is DVYCDKIRHLVDPAPPHLHGRISFHRLNIKND. Arg-190 contributes to the substrate binding site. The active-site Proton acceptor is Tyr-193. Residue 193-197 participates in NAD(+) binding; it reads YACAK. Position 222 (Asn-222) interacts with substrate. NAD(+) is bound at residue Arg-243. Substrate-binding positions include 244–248, 261–268, and 345–349; these read VLACF, VDGGQSQR, and DSDKR.

This sequence belongs to the NAD(P)-dependent epimerase/dehydratase family. As to quaternary structure, homodimer. NAD(+) serves as cofactor.

Its subcellular location is the cytoplasm. Catalyzes the conversion of UDP-D-glucuronate to a mixture of UDP-D-apiose and UDP-D-xylose. D-Apiose (3-C-hydroxymethyl-d-erythrose) is the only plant cell wall monosaccharide with a branched carbon skeleton and found in rhamnogalacturonan II (RG-II), apiogalacturonan, and several apioglycosides. The chain is UDP-D-apiose/UDP-D-xylose synthase from Oryza sativa subsp. japonica (Rice).